Here is a 418-residue protein sequence, read N- to C-terminus: MTSTLPNASTPDPASLQPSVRPGAHGRFGRFGGQYVPETLMPALAELEQAAAQAWNDPAFTAELNQLLKNYVGRATPLYEAERLTAHYRRADGGPRIWLKREDLNHTGAHKINNALGQALLALRMGKKRIIAETGAGQHGVATATVCARFGLECVIYMGAEDMRRQALNVFRMRLLGATVQPVTAGTATLKDATSEAIRDWVTNVESTHYILGSVAGPHPYPMLVRDFHAVIGQEARQQCREAFGRLPDVLMACVGGGSNAMGLFHPFVECTNVRLIGVEAAGDGVATGRHAATITEGRAGVLHGAMSLLLQDSDGQVQEAHSISAGLDYPGVGPEHSYLREIGRAEYGAVTDQQALGALRLVSELEGIIPALETAHAFAWLEQLCPTLPDGSEVVINCSGRGDKDVNTVAEKLGDQL.

The segment covering 1-18 has biased composition (polar residues); sequence MTSTLPNASTPDPASLQP. The tract at residues 1 to 23 is disordered; sequence MTSTLPNASTPDPASLQPSVRPG. K111 is subject to N6-(pyridoxal phosphate)lysine.

This sequence belongs to the TrpB family. In terms of assembly, tetramer of two alpha and two beta chains. The cofactor is pyridoxal 5'-phosphate.

The catalysed reaction is (1S,2R)-1-C-(indol-3-yl)glycerol 3-phosphate + L-serine = D-glyceraldehyde 3-phosphate + L-tryptophan + H2O. Its pathway is amino-acid biosynthesis; L-tryptophan biosynthesis; L-tryptophan from chorismate: step 5/5. Functionally, the beta subunit is responsible for the synthesis of L-tryptophan from indole and L-serine. The polypeptide is Tryptophan synthase beta chain (Parasynechococcus marenigrum (strain WH8102)).